The chain runs to 478 residues: Cytochrome c-552 (478 aa).

The first 26 residues, 1–26 (MARTILRARRFFSLILPFFFISSVYA), serve as a signal peptide directing secretion. His94 contributes to the heme c binding site. Positions 122, 125, and 126 each coordinate heme. Heme c-binding residues include Cys160, Cys163, His164, Cys209, Cys212, and His213. 4 residues coordinate Ca(2+): Glu215, Tyr216, Lys261, and Gln263. Tyr216 serves as a coordination point for substrate. Residue His264 participates in substrate binding. Positions 275, 282, 285, 286, 301, 314, 317, 318, and 393 each coordinate heme c.

It belongs to the cytochrome c-552 family. Requires Ca(2+) as cofactor. Heme c serves as cofactor.

The protein localises to the periplasm. The enzyme catalyses 6 Fe(III)-[cytochrome c] + NH4(+) + 2 H2O = 6 Fe(II)-[cytochrome c] + nitrite + 8 H(+). It functions in the pathway nitrogen metabolism; nitrate reduction (assimilation). Its function is as follows. Catalyzes the reduction of nitrite to ammonia, consuming six electrons in the process. The sequence is that of Cytochrome c-552 from Citrobacter koseri (strain ATCC BAA-895 / CDC 4225-83 / SGSC4696).